A 910-amino-acid chain; its full sequence is Protein kinase 3 (910 aa).

The span at 119-129 (SPSGGGGGGSG) shows a compositional bias: gly residues. Disordered stretches follow at residues 119-239 (SPSG…PNLI), 270-295 (FNNN…KTPT), and 391-454 (NKDD…NDKK). 6 stretches are compositionally biased toward low complexity: residues 130-160 (VSSN…QPTS), 169-196 (LSES…QSTS), 209-220 (GLSGSSTSSSSA), 227-239 (NNNA…PNLI), 270-290 (FNNN…TTST), and 422-450 (INQP…TSQT). A Protein kinase domain is found at 498–763 (FELLKVLGVG…FEEISSHPFF (266 aa)). ATP is bound by residues 504–512 (LGVGSFGRV) and Lys527. Asp621 serves as the catalytic Proton acceptor. Thr664 is modified (phosphothreonine; by autocatalysis). An AGC-kinase C-terminal domain is found at 764–854 (ELIPWRMLES…NKEEEDGIMG (91 aa)). Disordered stretches follow at residues 786–812 (EISL…TLSC) and 859–910 (IGSI…KGSV). Low complexity-rich tracts occupy residues 788–809 (SLPN…NNLT) and 859–886 (IGSI…SGGS).

This sequence belongs to the protein kinase superfamily. AGC Ser/Thr protein kinase family.

It catalyses the reaction L-seryl-[protein] + ATP = O-phospho-L-seryl-[protein] + ADP + H(+). The enzyme catalyses L-threonyl-[protein] + ATP = O-phospho-L-threonyl-[protein] + ADP + H(+). The chain is Protein kinase 3 (pkgC) from Dictyostelium discoideum (Social amoeba).